A 331-amino-acid chain; its full sequence is Bifunctional nuclease 1 (331 aa).

Residues 126-261 (CVQNNPRVLR…RIAYNNGLKV (136 aa)) form the BFN domain. The UVR domain occupies 291 to 326 (EAQEFDLVRNMLVAAVEERYKDAAQYRDQLFMFRAK).

This sequence belongs to the bifunctional nuclease family.

Its subcellular location is the nucleus. Its function is as follows. Bifunctional nuclease with both RNase and DNase activities. Involved in basal defense response. Participates in abscisic acid-derived callose deposition following infection by a necrotrophic pathogen. The protein is Bifunctional nuclease 1 (BBD1) of Oryza sativa subsp. japonica (Rice).